Reading from the N-terminus, the 263-residue chain is Acyl-[acyl-carrier-protein]--UDP-N-acetylglucosamine O-acyltransferase (263 aa).

This sequence belongs to the transferase hexapeptide repeat family. LpxA subfamily. Homotrimer.

The protein resides in the cytoplasm. It carries out the reaction a (3R)-hydroxyacyl-[ACP] + UDP-N-acetyl-alpha-D-glucosamine = a UDP-3-O-[(3R)-3-hydroxyacyl]-N-acetyl-alpha-D-glucosamine + holo-[ACP]. Its pathway is glycolipid biosynthesis; lipid IV(A) biosynthesis; lipid IV(A) from (3R)-3-hydroxytetradecanoyl-[acyl-carrier-protein] and UDP-N-acetyl-alpha-D-glucosamine: step 1/6. In terms of biological role, involved in the biosynthesis of lipid A, a phosphorylated glycolipid that anchors the lipopolysaccharide to the outer membrane of the cell. This is Acyl-[acyl-carrier-protein]--UDP-N-acetylglucosamine O-acyltransferase from Xanthomonas oryzae pv. oryzae (strain PXO99A).